A 339-amino-acid chain; its full sequence is DNA-directed RNA polymerase subunit alpha (339 aa).

Positions 1–233 (MVREEIAVAT…DLFIPFLHAE (233 aa)) are alpha N-terminal domain (alpha-NTD). Positions 267–339 (KKMALKSIFI…FGFDLPKNGK (73 aa)) are alpha C-terminal domain (alpha-CTD).

This sequence belongs to the RNA polymerase alpha chain family. In terms of assembly, in plastids the minimal PEP RNA polymerase catalytic core is composed of four subunits: alpha, beta, beta', and beta''. When a (nuclear-encoded) sigma factor is associated with the core the holoenzyme is formed, which can initiate transcription.

Its subcellular location is the plastid. It localises to the chloroplast. The enzyme catalyses RNA(n) + a ribonucleoside 5'-triphosphate = RNA(n+1) + diphosphate. In terms of biological role, DNA-dependent RNA polymerase catalyzes the transcription of DNA into RNA using the four ribonucleoside triphosphates as substrates. The chain is DNA-directed RNA polymerase subunit alpha from Piper cenocladum (Ant piper).